Reading from the N-terminus, the 351-residue chain is Protein Tex24 (351 aa).

3 disordered regions span residues 69–101, 117–144, and 275–298; these read PSTA…PSLS, PEDR…AQGK, and EKVK…PKSM. Residues 73–83 show a composition bias toward basic residues; sequence HGKRKPGHLPR. Residues 275 to 285 show a composition bias toward basic and acidic residues; it reads EKVKPSSHDMH.

Specific to testis, where it is expressed in spermatogonia.

It localises to the nucleus. Functionally, nuclear factor which might have a role in spermatogenesis. This Mus musculus (Mouse) protein is Protein Tex24.